Reading from the N-terminus, the 127-residue chain is Glycine cleavage system H protein (127 aa).

The Lipoyl-binding domain occupies 24 to 106 (TATIGITDYA…YAEGWMLKLK (83 aa)). The residue at position 65 (Lys65) is an N6-lipoyllysine.

This sequence belongs to the GcvH family. The glycine cleavage system is composed of four proteins: P, T, L and H. (R)-lipoate serves as cofactor.

The glycine cleavage system catalyzes the degradation of glycine. The H protein shuttles the methylamine group of glycine from the P protein to the T protein. This Opitutus terrae (strain DSM 11246 / JCM 15787 / PB90-1) protein is Glycine cleavage system H protein.